Reading from the N-terminus, the 123-residue chain is Large ribosomal subunit protein bL12 (123 aa).

Belongs to the bacterial ribosomal protein bL12 family. Homodimer. Part of the ribosomal stalk of the 50S ribosomal subunit. Forms a multimeric L10(L12)X complex, where L10 forms an elongated spine to which 2 to 4 L12 dimers bind in a sequential fashion. Binds GTP-bound translation factors.

Forms part of the ribosomal stalk which helps the ribosome interact with GTP-bound translation factors. Is thus essential for accurate translation. The sequence is that of Large ribosomal subunit protein bL12 from Rhodospirillum rubrum (strain ATCC 11170 / ATH 1.1.1 / DSM 467 / LMG 4362 / NCIMB 8255 / S1).